Here is a 357-residue protein sequence, read N- to C-terminus: Dual-specificity RNA methyltransferase RlmN (357 aa).

The active-site Proton acceptor is the Glu-89. Residues 109–340 enclose the Radical SAM core domain; sequence EGEKYTVCVS…CTIRESKALD (232 aa). Cys-116 and Cys-345 are disulfide-bonded. 3 residues coordinate [4Fe-4S] cluster: Cys-123, Cys-127, and Cys-130. S-adenosyl-L-methionine is bound by residues 173 to 174, Ser-203, 226 to 228, and Asn-302; these read GE and SLH. The active-site S-methylcysteine intermediate is the Cys-345.

It belongs to the radical SAM superfamily. RlmN family. Requires [4Fe-4S] cluster as cofactor.

Its subcellular location is the cytoplasm. The enzyme catalyses adenosine(2503) in 23S rRNA + 2 reduced [2Fe-2S]-[ferredoxin] + 2 S-adenosyl-L-methionine = 2-methyladenosine(2503) in 23S rRNA + 5'-deoxyadenosine + L-methionine + 2 oxidized [2Fe-2S]-[ferredoxin] + S-adenosyl-L-homocysteine. It catalyses the reaction adenosine(37) in tRNA + 2 reduced [2Fe-2S]-[ferredoxin] + 2 S-adenosyl-L-methionine = 2-methyladenosine(37) in tRNA + 5'-deoxyadenosine + L-methionine + 2 oxidized [2Fe-2S]-[ferredoxin] + S-adenosyl-L-homocysteine. Its function is as follows. Specifically methylates position 2 of adenine 2503 in 23S rRNA and position 2 of adenine 37 in tRNAs. m2A2503 modification seems to play a crucial role in the proofreading step occurring at the peptidyl transferase center and thus would serve to optimize ribosomal fidelity. This is Dual-specificity RNA methyltransferase RlmN from Helicobacter pylori (strain J99 / ATCC 700824) (Campylobacter pylori J99).